Here is a 76-residue protein sequence, read N- to C-terminus: Bowman-Birk type proteinase inhibitor DE-4 (76 aa).

7 disulfides stabilise this stretch: Cys-15–Cys-69, Cys-16–Cys-31, Cys-19–Cys-65, Cys-21–Cys-29, Cys-39–Cys-46, Cys-43–Cys-58, and Cys-48–Cys-56.

Belongs to the Bowman-Birk serine protease inhibitor family.

This Macrotyloma axillare (Perennial horse gram) protein is Bowman-Birk type proteinase inhibitor DE-4.